Consider the following 498-residue polypeptide: Glutamyl-tRNA(Gln) amidotransferase subunit A (498 aa).

Active-site charge relay system residues include K80 and S155. A disordered region spans residues 132–159; the sequence is SSTENSAYGPTRNPWDTDRVPGGSSGGS. Catalysis depends on S179, which acts as the Acyl-ester intermediate.

The protein belongs to the amidase family. GatA subfamily. In terms of assembly, heterotrimer of A, B and C subunits.

It carries out the reaction L-glutamyl-tRNA(Gln) + L-glutamine + ATP + H2O = L-glutaminyl-tRNA(Gln) + L-glutamate + ADP + phosphate + H(+). Its function is as follows. Allows the formation of correctly charged Gln-tRNA(Gln) through the transamidation of misacylated Glu-tRNA(Gln) in organisms which lack glutaminyl-tRNA synthetase. The reaction takes place in the presence of glutamine and ATP through an activated gamma-phospho-Glu-tRNA(Gln). This is Glutamyl-tRNA(Gln) amidotransferase subunit A from Thermobifida fusca (strain YX).